The chain runs to 347 residues: tRNA N6-adenosine threonylcarbamoyltransferase (347 aa).

Fe cation is bound by residues H117 and H121. Residues 140–144 (LVSGG), D173, G186, and N280 each bind substrate. Position 308 (D308) interacts with Fe cation.

Belongs to the KAE1 / TsaD family. It depends on Fe(2+) as a cofactor.

It localises to the cytoplasm. It carries out the reaction L-threonylcarbamoyladenylate + adenosine(37) in tRNA = N(6)-L-threonylcarbamoyladenosine(37) in tRNA + AMP + H(+). Required for the formation of a threonylcarbamoyl group on adenosine at position 37 (t(6)A37) in tRNAs that read codons beginning with adenine. Is involved in the transfer of the threonylcarbamoyl moiety of threonylcarbamoyl-AMP (TC-AMP) to the N6 group of A37, together with TsaE and TsaB. TsaD likely plays a direct catalytic role in this reaction. The chain is tRNA N6-adenosine threonylcarbamoyltransferase from Psychrobacter sp. (strain PRwf-1).